Consider the following 512-residue polypeptide: Cytochrome P450 26B1 (512 aa).

C441 contacts heme.

It belongs to the cytochrome P450 family. The cofactor is heme.

It is found in the endoplasmic reticulum membrane. The protein resides in the microsome membrane. It carries out the reaction all-trans-retinoate + reduced [NADPH--hemoprotein reductase] + O2 = all-trans-4-hydroxyretinoate + oxidized [NADPH--hemoprotein reductase] + H2O + H(+). It catalyses the reaction all-trans-retinoate + reduced [NADPH--hemoprotein reductase] + O2 = all-trans-18-hydroxyretinoate + oxidized [NADPH--hemoprotein reductase] + H2O + H(+). In terms of biological role, a cytochrome P450 monooxygenase involved in the metabolism of retinoates (RAs), the active metabolites of vitamin A, and critical signaling molecules in animals. RAs exist as at least four different isomers: all-trans-RA (atRA), 9-cis-RA, 13-cis-RA, and 9,13-dicis-RA, where atRA is considered to be the biologically active isomer, although 9-cis-RA and 13-cis-RA also have activity. Catalyzes the hydroxylation of atRA primarily at C-4 and C-18, thereby contributing to the regulation of atRA homeostasis and signaling. Hydroxylation of atRA limits its biological activity and initiates a degradative process leading to its eventual elimination. Involved in the convertion of atRA to all-trans-4-oxo-RA. Can oxidize all-trans-13,14-dihydroretinoate (DRA) to metabolites which could include all-trans-4-oxo-DRA, all-trans-4-hydroxy-DRA, all-trans-5,8-epoxy-DRA, and all-trans-18-hydroxy-DRA. Shows preference for the following substrates: atRA &gt; 9-cis-RA &gt; 13-cis-RA. Plays a central role in germ cell development: acts by degrading RAs in the developing testis, preventing STRA8 expression, thereby leading to delay of meiosis. Required for the maintenance of the undifferentiated state of male germ cells during embryonic development in Sertoli cells, inducing arrest in G0 phase of the cell cycle and preventing meiotic entry. Plays a role in skeletal development, both at the level of patterning and in the ossification of bone and the establishment of some synovial joints. Essential for postnatal survival. Its function is as follows. Also has a significant activity in oxidation of tazarotenic acid and may therefore metabolize that xenobiotic in vivo. This chain is Cytochrome P450 26B1 (Cyp26b1), found in Mus musculus (Mouse).